The following is a 201-amino-acid chain: Nucleoid occlusion factor SlmA (201 aa).

In terms of domain architecture, HTH tetR-type spans 14 to 75 (KERQQQVLEV…ALIERIEMTL (62 aa)). Residues 38-57 (TTERLSKAVGVSEGALYRYF) constitute a DNA-binding region (H-T-H motif).

It belongs to the nucleoid occlusion factor SlmA family. As to quaternary structure, homodimer. Interacts with FtsZ.

Its subcellular location is the cytoplasm. The protein localises to the nucleoid. In terms of biological role, required for nucleoid occlusion (NO) phenomenon, which prevents Z-ring formation and cell division over the nucleoid. Acts as a DNA-associated cell division inhibitor that binds simultaneously chromosomal DNA and FtsZ, and disrupts the assembly of FtsZ polymers. SlmA-DNA-binding sequences (SBS) are dispersed on non-Ter regions of the chromosome, preventing FtsZ polymerization at these regions. The chain is Nucleoid occlusion factor SlmA from Glaesserella parasuis serovar 5 (strain SH0165) (Haemophilus parasuis).